A 599-amino-acid polypeptide reads, in one-letter code: Beta-(1--&gt;2)glucan export ATP-binding/permease protein NdvA (599 aa).

The ABC transmembrane type-1 domain occupies 21-301; sequence TITMCVASVL…ISAFINQTVT (281 aa). Transmembrane regions (helical) follow at residues 22–42, 55–75, 156–176, 248–268, and 276–296; these read ITMCVASVLVALVTLAEPVLF, IFSPLLMWAALGGFNIMAAVF, MRMSLVLIVLGVIYVMIGQLV, MASTFSMVVVLVLGAYFVTKG, and IAFIGFAQLMIGRLDQISAFI. One can recognise an ABC transporter domain in the interval 335–569; that stretch reads IVFDNVTFEF…GGRFSDLLRA (235 aa). Residue 368 to 375 participates in ATP binding; that stretch reads GPTGAGKT.

The protein belongs to the ABC transporter superfamily. Beta-(1--&gt;2)glucan exporter (TC 3.A.1.108.1) family. In terms of assembly, homodimer.

It is found in the cell inner membrane. It carries out the reaction [(1-&gt;2)-beta-D-glucosyl](n)(in) + ATP + H2O = [(1-&gt;2)-beta-D-glucosyl](n)(out) + ADP + phosphate + H(+). Its function is as follows. Involved in beta-(1--&gt;2)glucan export. Transmembrane domains (TMD) form a pore in the inner membrane and the ATP-binding domain (NBD) is responsible for energy generation. The protein is Beta-(1--&gt;2)glucan export ATP-binding/permease protein NdvA of Brucella suis biovar 1 (strain 1330).